A 256-amino-acid polypeptide reads, in one-letter code: Ribonuclease HII (256 aa).

The RNase H type-2 domain occupies 72–256 (QYIAGMDEVG…SFNPVPKYLN (185 aa)). A divalent metal cation-binding residues include Asp-78, Glu-79, and Asp-170.

It belongs to the RNase HII family. The cofactor is Mn(2+). Mg(2+) is required as a cofactor.

Its subcellular location is the cytoplasm. The catalysed reaction is Endonucleolytic cleavage to 5'-phosphomonoester.. Its function is as follows. Endonuclease that specifically degrades the RNA of RNA-DNA hybrids. The protein is Ribonuclease HII of Limosilactobacillus reuteri (strain DSM 20016) (Lactobacillus reuteri).